The primary structure comprises 465 residues: Probable zinc metalloprotease PTT_17836 (465 aa).

Residues 1-20 (MRSASTLAVCAATLLQIACS) form the signal peptide. N-linked (GlcNAc...) asparagine glycosylation occurs at N140. Zn(2+) is bound by residues H163, D183, and E216. N231 is a glycosylation site (N-linked (GlcNAc...) asparagine). D243 is a binding site for Zn(2+). N272, N330, N378, N384, N421, and N426 each carry an N-linked (GlcNAc...) asparagine glycan. A Fibronectin type-III domain is found at 371–464 (APTNVGVNTT…LPFPFGCARN (94 aa)).

It belongs to the peptidase M28 family. M28B subfamily. The cofactor is Zn(2+).

Its subcellular location is the secreted. The protein is Probable zinc metalloprotease PTT_17836 of Pyrenophora teres f. teres (strain 0-1) (Barley net blotch fungus).